A 393-amino-acid chain; its full sequence is uncharacterized protein (393 aa).

ATP is bound at residue 67 to 74 (GPDGMGKS).

This is an uncharacterized protein from Mycobacterium tuberculosis (strain CDC 1551 / Oshkosh).